Consider the following 336-residue polypeptide: Fructose-1,6-bisphosphatase class 1 (336 aa).

Mg(2+)-binding residues include E92, D115, L117, and D118. Substrate-binding positions include 118–121, N211, Y244, 262–264, and K274; these read DGSS and YLY. Mg(2+) is bound at residue E280.

It belongs to the FBPase class 1 family. In terms of assembly, homotetramer. Requires Mg(2+) as cofactor.

It localises to the cytoplasm. The enzyme catalyses beta-D-fructose 1,6-bisphosphate + H2O = beta-D-fructose 6-phosphate + phosphate. It functions in the pathway carbohydrate biosynthesis; gluconeogenesis. The protein is Fructose-1,6-bisphosphatase class 1 of Aliivibrio fischeri (strain ATCC 700601 / ES114) (Vibrio fischeri).